The following is an 805-amino-acid chain: Chloride channel protein (805 aa).

Topologically, residues 1–48 (MSHEKNEASGYPEAQSWKSQEAMLGARTEVSRWRAVKNCLYRHLVKVL) are cytoplasmic. The next 2 membrane-spanning stretches (helical) occupy residues 49–86 (GEDWIFLLLLGALMALVSWAMDFIGSRGLRFYKYLFAL) and 93–116 (LQYLVWVCYPLALILFSSLFCQIV). The short motif at 122–126 (GSGIP) is the Selectivity filter part_1 element. Chloride is bound at residue S123. The segment at residues 125–132 (IPELKTII) is an intramembrane region (helical). 2 helical membrane passes run 141–159 (LTLRTFVAKTVGLTVALSA) and 166–184 (EGPFVHIASICATLLNQLL). Residues 164–168 (GKEGP) carry the Selectivity filter part_2 motif. 2 consecutive intramembrane regions (helical) follow at residues 201 to 213 (ILTVGCALGISCC) and 217 to 225 (PLAGVLFSI). A run of 3 helical transmembrane segments spans residues 237-256 (YWRGFLGGAFSAFIFRVLSV), 283-311 (MPAFAIIGIASGFFGALFVYLNRQIIVFM), and 320-339 (ILKKQRLIYPAVVTFVLATL). N365 carries N-linked (GlcNAc...) asparagine glycosylation. 2 helical membrane passes run 388 to 408 (LNIFIVMALYFVMHFWMAALA) and 416 to 439 (GAFVPVFNLGAVLGRFVGELMALL). A Selectivity filter part_3 motif is present at residues 416–420 (GAFVP). F418 is a chloride binding site. The segment at residues 456–470 (GEYAVIGAAAMTGAV) is an intramembrane region (helical). An intramembrane region (note=Loop between two helices) is located at residues 471-472 (TH). The segment at residues 473-484 (AVSTAVICFELT) is an intramembrane region (helical). An intramembrane region (note=Loop between two helices) is located at residues 485–489 (GQISH). A helical membrane pass occupies residues 490–507 (VLPMMVAVILANMVAQGL). At 508–805 (QPSLYDSIIQ…RTATSNSSGK (298 aa)) the chain is on the cytoplasmic side. Y512 is a chloride binding site. Residues 543–601 (MVRDVTSIASTSTYGDLLHVLRQTKLKFFPFVDTPDTNTLLGSIDRTEVEGLLQRRISA) enclose the CBS 1 domain. Disordered regions lie at residues 606–625 (PAAAAEADEEGRNGETGASF) and 653–684 (KVQTEDPRPPSPVPAEEPTQTSGIYQKKQKGT). Residues 719 to 776 (IDQSPFQLVEGTSLQKTHTLFSLLGLDRAYVTSMGKLVGVVALAEIQAAIEGSYQKGF) form the CBS 2 domain.

Belongs to the chloride channel (TC 2.A.49) family. ClC-0 subfamily. In terms of assembly, homodimer. Each subunit contains a channel ('Double barreled channel').

The protein resides in the membrane. Its function is as follows. Voltage-gated chloride channel. This channel is thought to ensure the high conductance of the non-innervated membrane of the electrocyte necessary for efficient current generation caused by sodium influx through the acetylcholine receptor at the innervated membrane. The sequence is that of Chloride channel protein from Torpedo marmorata (Marbled electric ray).